The primary structure comprises 72 residues: Large ribosomal subunit protein bL31 (72 aa).

Zn(2+) contacts are provided by Cys-16, Cys-18, Cys-38, and Cys-41.

The protein belongs to the bacterial ribosomal protein bL31 family. Type A subfamily. As to quaternary structure, part of the 50S ribosomal subunit. Zn(2+) is required as a cofactor.

Its function is as follows. Binds the 23S rRNA. The polypeptide is Large ribosomal subunit protein bL31 (Vibrio atlanticus (strain LGP32) (Vibrio splendidus (strain Mel32))).